Consider the following 63-residue polypeptide: Adipokinetic prohormone type 1 (63 aa).

The N-terminal stretch at 1 to 22 (MVQRCLVVALLVVVVAAALCSA) is a signal peptide. At Gln23 the chain carries Pyrrolidone carboxylic acid. Thr32 carries the post-translational modification Threonine amide.

This sequence belongs to the AKH/HRTH/RPCH family. Adipokinetic hormone precursor-related peptide (APRP) can form three type of disulfide-bond dimers: p1 (alpha-alpha), p2 (alpha-beta), and p3 (beta-beta).

The protein resides in the secreted. In terms of biological role, this hormone, released from cells in the corpora cardiaca, causes release of diglycerides from the fat body and stimulation of muscles to use these diglycerides as an energy source during energy-demanding processes. The chain is Adipokinetic prohormone type 1 from Schistocerca nitens (Vagrant locust).